Consider the following 330-residue polypeptide: Serine/threonine-protein phosphatase PP1-alpha catalytic subunit (330 aa).

Residue Ser-2 is modified to N-acetylserine. Phosphoserine occurs at positions 2 and 22. Asp-64, His-66, Asp-92, and Asn-124 together coordinate Mn(2+). The active-site Proton donor is the His-125. 2 residues coordinate Mn(2+): His-173 and His-248. Lys-305 bears the N6-acetyllysine mark. Tyr-306 is subject to Phosphotyrosine. The tract at residues 306–330 is disordered; that stretch reads YGQFSGLNPGGRPITPPRNSAKAKK. Thr-320 carries the phosphothreonine modification. Ser-325 is modified (phosphoserine).

Belongs to the PPP phosphatase family. PP-1 subfamily. In terms of assembly, PP1 comprises a catalytic subunit, PPP1CA, PPP1CB or PPP1CC, which is folded into its native form by inhibitor 2 and glycogen synthetase kinase 3, and then complexed to one or several targeting or regulatory subunits. PPP1R12A, PPP1R12B and PPP1R12C mediate binding to myosin. PPP1R3A (in skeletal muscle), PPP1R3B (in liver), PPP1R3C, PPP1R3D and PPP1R3F (in brain) mediate binding to glycogen. Interacts with PPP1R15A and PPP1R15B; the interactions mediate binding to EIF2S1. Part of a complex containing PPP1R15B, PP1 and NCK1/2. Interacts with PPP1R9A, PPP1R9B and PPP1R7. Interacts with YLPM1. Forms a complex with ILF2, ILF3, YLPM1, KHDRBS1, RBMX and NCOA5. Interacts with NOM1 and PPP1R8. Interacts with PPP1R16B. Interacts with RPSA only in the presence of PPP1R16B. Component of the PNUTS-PP1 phosphatase complex, composed of PPP1R10/PNUTS, TOX4, WDR82, and PPP1CA or PPP1CB or PPP1CC. Interacts with PPP1R10/PNUTS and PPP1R8. Interacts with WDR82 in the presence of PPP1R10/PNUTS. Interacts with PPP1R39. transition from mitosis into interphase. Interacts with TRIM28; the interaction dephosphorylates TRIM28 on 'Ser-824' and forms a complex at the p21 promoter site. Interacts with NEK2. Interacts with PHACTR4; which acts as an activator of PP1 activity. Interacts with FER; this promotes phosphorylation at Thr-320. Interacts with BTBD10. Interacts with KCTD20. Interacts with FOXP3. Interacts with CENPA. Interacts with ATG16L1. Found in a complex with PPP1CA, PPP1CC, SHC1 and PEAK1. Interacts with tensin TNS1. Interacts with SAXO4, PPP1R21, PPP1R26, PPP1R27, PPP1R35, PPP1R36, PPP1R37, SH3RF2, ELFN1 and ELFN2. Interacts with TPRN; the interaction results in inhibition of PPC1A phosphatase activity. Interacts with SKA1 (via C-terminus); the interaction is direct and required for the recruitment of PP1 to the kinetochore. Interacts with the KNL1 complex subunit KNL1; the interaction is direct and mutually exclusive with KNL1 binding to microtubules. Component of the SHOC2-MRAS-PP1c (SMP) complex consisting of SHOC2, GTP-bound M-Ras/MRAS and the catalytic subunit of protein phosphatase 1 (either PPP1CA, PPP1CB or PPP1CC). SHOC2 and PP1c preferably bind M-Ras/MRAS, but they also bind K-Ras/KRAS, N-Ras/NRAS and H-Ras/HRAS; these interactions are GTP-dependent and both SHOC2 and PP1c are required to form a stable complex. Interacts with SHOC2 in the absence of Ras GTPases. Mn(2+) serves as cofactor. Phosphorylated. Dephosphorylated at Thr-320 in the presence of ionizing radiation.

The protein localises to the cytoplasm. Its subcellular location is the nucleus. It localises to the nucleoplasm. It is found in the nucleolus. The enzyme catalyses O-phospho-L-seryl-[protein] + H2O = L-seryl-[protein] + phosphate. It carries out the reaction O-phospho-L-threonyl-[protein] + H2O = L-threonyl-[protein] + phosphate. In terms of biological role, protein phosphatase that associates with over 200 regulatory proteins to form highly specific holoenzymes which dephosphorylate hundreds of biological targets. Protein phosphatase 1 (PP1) is essential for cell division, transcription elongation, and participates in the regulation of glycogen metabolism, muscle contractility and protein synthesis. Involved in regulation of ionic conductances and long-term synaptic plasticity. May play an important role in dephosphorylating substrates such as the postsynaptic density-associated Ca(2+)/calmodulin dependent protein kinase II. Catalytic component of the PNUTS-PP1 protein phosphatase complex, a protein phosphatase 1 (PP1) complex that promotes RNA polymerase II transcription pause-release, allowing transcription elongation: the PNUTS-PP1 complex mediates the release of RNA polymerase II from promoter-proximal region of genes by catalyzing dephosphorylation of proteins involved in transcription, such as AFF4, CDK9, MEPCE, INTS12, NCBP1, POLR2M/GDOWN1 and SUPT6H. The PNUTS-PP1 complex also regulates transcription termination by mediating dephosphorylation of SUPT5H in termination zones downstream of poly(A) sites, thereby promoting deceleration of RNA polymerase II transcription. PNUTS-PP1 complex is also involved in the response to replication stress by mediating dephosphorylation of POLR2A at 'Ser-5' of the CTD, promoting RNA polymerase II degradation. PNUTS-PP1 also plays a role in the control of chromatin structure and cell cycle progression during the transition from mitosis into interphase. Regulates NEK2 function in terms of kinase activity and centrosome number and splitting, both in the presence and absence of radiation-induced DNA damage. Regulator of neural tube and optic fissure closure, and enteric neural crest cell (ENCCs) migration during development. In balance with CSNK1D and CSNK1E, determines the circadian period length, through the regulation of the speed and rhythmicity of PER1 and PER2 phosphorylation. May dephosphorylate CSNK1D and CSNK1E. Dephosphorylates the 'Ser-418' residue of FOXP3 in regulatory T-cells (Treg) from patients with rheumatoid arthritis, thereby inactivating FOXP3 and rendering Treg cells functionally defective. Dephosphorylates CENPA. Dephosphorylates the 'Ser-139' residue of ATG16L1 causing dissociation of ATG12-ATG5-ATG16L1 complex, thereby inhibiting autophagy. Together with PPP1CC (PP1-gamma subunit), dephosphorylates IFIH1/MDA5 and RIG-I leading to their activation and a functional innate immune response. Core component of the SHOC2-MRAS-PP1c (SMP) holophosphatase complex that regulates the MAPK pathway activation. The SMP complex specifically dephosphorylates the inhibitory phosphorylation at 'Ser-259' of RAF1 kinase, 'Ser-365' of BRAF kinase and 'Ser-214' of ARAF kinase, stimulating their kinase activities. The SMP complex enhances the dephosphorylation activity and substrate specificity of PP1c. This is Serine/threonine-protein phosphatase PP1-alpha catalytic subunit (PPP1CA) from Canis lupus familiaris (Dog).